A 686-amino-acid polypeptide reads, in one-letter code: Asparagine-rich protein (686 aa).

An N-terminal signal peptide occupies residues 1–18 (MKGTSALLLIGFFHATIS). Disordered regions lie at residues 34 to 73 (KRGN…DKTA), 125 to 148 (SLTS…SSSI), and 201 to 236 (ITRQ…QPPN). Residues 37–49 (NLNTGGQITSNSA) show a composition bias toward polar residues. The segment covering 62 to 73 (EPPKRRNTDKTA) has biased composition (basic and acidic residues).

Prismatic layer of shell (at protein level). Expressed primarily in the mantle with highest level in the mantle edge and lower level in the mantle pallium.

It is found in the secreted. The protein is Asparagine-rich protein of Margaritifera margaritifera (Freshwater pearl mussel).